Reading from the N-terminus, the 339-residue chain is MRVLGIETSCDETGVAIYDQQQGLLANQLYSQVKLHADYGGVVPELASRDHVHKTVPLIQAALAEAGLQASDIHGVAYTAGPGLVGALMVGATVGRALAYAWGVPAVAVHHMEGHLLAPMLEANPPAFPFVALLVSGGHTQLIAVTGIGEYQLLGESIDDAAGEAFDKTAKLLGLDYPGGPMLARLAQQGVPGRYKFPRPMTDHPGLAFSFSGLKTFAANTVRAGADDHQTRADVARAFEEAVVDTLMIKCRRALDQTRFQRLVMAGGVSANQSLRASMGEMMRQRGGEVFYARPEFCTDNGAMIAYAGMVRLQGGSQASLAVSVRPRWPLEELPALGA.

Residues His111 and His115 each coordinate Fe cation. Substrate-binding positions include 134–138, Asp167, Gly180, and Asn272; that span reads LVSGG. Asp300 contributes to the Fe cation binding site.

The protein belongs to the KAE1 / TsaD family. It depends on Fe(2+) as a cofactor.

The protein localises to the cytoplasm. The catalysed reaction is L-threonylcarbamoyladenylate + adenosine(37) in tRNA = N(6)-L-threonylcarbamoyladenosine(37) in tRNA + AMP + H(+). Functionally, required for the formation of a threonylcarbamoyl group on adenosine at position 37 (t(6)A37) in tRNAs that read codons beginning with adenine. Is involved in the transfer of the threonylcarbamoyl moiety of threonylcarbamoyl-AMP (TC-AMP) to the N6 group of A37, together with TsaE and TsaB. TsaD likely plays a direct catalytic role in this reaction. This is tRNA N6-adenosine threonylcarbamoyltransferase from Sodalis glossinidius (strain morsitans).